The chain runs to 550 residues: Protein UshA (550 aa).

Residues 1-25 form the signal peptide; it reads MKLLQRGVALALLTTFTLASETALA. Residues D41, H43, D84, N116, H217, H252, and Q254 each coordinate Zn(2+). An intrachain disulfide couples C258 to C275. Substrate-binding positions include 375–379 and 498–504; these read RDKVR and FNATGGD.

This sequence belongs to the 5'-nucleotidase family. Monomer. It depends on Zn(2+) as a cofactor.

The protein localises to the periplasm. The catalysed reaction is UDP-sugar + H2O = UMP + alpha-D-aldose 1-phosphate.. It catalyses the reaction a ribonucleoside 5'-phosphate + H2O = a ribonucleoside + phosphate. With respect to regulation, the activity of this protein is inhibited by an intracellular protein inhibitor. In terms of biological role, degradation of external UDP-glucose to uridine monophosphate and glucose-1-phosphate, which can then be used by the cell. The protein is Protein UshA (ushA) of Escherichia coli (strain K12).